A 306-amino-acid chain; its full sequence is MSLKLQASNVTNKNDPKSINSRVFIGNLNTALVKKSDVETIFSKYGRVAGCSVHKGYAFVQYSNERHARAAVLGENGRVLAGQTLDINMAGEPKPDRPKGLKRAASAIYSGYIFDYDYYRDDFYDRLFDYRGRLSPVPVPRAVPVKRPRVTVPLVRRVKTNVPVKLFARSTAVTTSSAKIKLKSSELQAIKTELTQIKSNIDALLSRLEQIAAEQKANPDGKKKGDGGGAGGGGGGGGSGGGGSGGGGGGGSSRPPAPQENTTSEAGLPQGEARTRDDGDEEGLLTHSEEELEHSQDTDADDGALQ.

Residue serine 2 is modified to N-acetylserine. Lysine 4 participates in a covalent cross-link: Glycyl lysine isopeptide (Lys-Gly) (interchain with G-Cter in SUMO2). In terms of domain architecture, RRM spans 21–92 (SRVFIGNLNT…QTLDINMAGE (72 aa)). Lysine 44 is modified (N6-acetyllysine). Serine 63 is modified (phosphoserine). Glycyl lysine isopeptide (Lys-Gly) (interchain with G-Cter in SUMO2) cross-links involve residues lysine 94 and lysine 99. Serine 106 and serine 135 each carry phosphoserine. Lysine 159 is covalently cross-linked (Glycyl lysine isopeptide (Lys-Gly) (interchain with G-Cter in SUMO2)). Lysine 165 is subject to N6-acetyllysine; alternate. Lysine 165 participates in a covalent cross-link: Glycyl lysine isopeptide (Lys-Gly) (interchain with G-Cter in SUMO2); alternate. Glycyl lysine isopeptide (Lys-Gly) (interchain with G-Cter in SUMO2) cross-links involve residues lysine 179 and lysine 191. Positions 183 to 216 (KSSELQAIKTELTQIKSNIDALLSRLEQIAAEQK) form a coiled coil. A disordered region spans residues 215-306 (QKANPDGKKK…DTDADDGALQ (92 aa)). Over residues 217-226 (ANPDGKKKGD) the composition is skewed to basic and acidic residues. A compositionally biased stretch (gly residues) spans 227–252 (GGGAGGGGGGGGSGGGGSGGGGGGGS). The segment at 227 to 253 (GGGAGGGGGGGGSGGGGSGGGGGGGSS) is epitope (recognized by BKRF1 antibodies). The residue at position 262 (threonine 262) is a Phosphothreonine. Serine 264 bears the Phosphoserine mark. Threonine 286 carries the post-translational modification Phosphothreonine. Residues 287-297 (HSEEELEHSQD) show a composition bias toward basic and acidic residues. Serine 288 and serine 295 each carry phosphoserine. Threonine 298 carries the post-translational modification Phosphothreonine.

The protein belongs to the RRM HNRPC family. RALY subfamily. Identified in the spliceosome C complex. Interacts (through its RNA-binding domain) with FUS (through its RNA-binding domain); both are components of the same RNPs. Expressed in heart, brain, lung, liver, skeletal muscle, kidney and pancreas. Weakly expressed in placenta.

The protein localises to the nucleus. Functionally, RNA-binding protein that acts as a transcriptional cofactor for cholesterol biosynthetic genes in the liver. Binds the lipid-responsive non-coding RNA LeXis and is required for LeXis-mediated effect on cholesterogenesis. May be a heterogeneous nuclear ribonucleoprotein (hnRNP). The chain is RNA-binding protein Raly (RALY) from Homo sapiens (Human).